The primary structure comprises 174 residues: Flavodoxin 1 (174 aa).

The region spanning 4–168 (IGIFYGSSSG…RLERWIAVLQ (165 aa)) is the Flavodoxin-like domain. Residues 10–14 (SSSGV) and 89–122 (LFGA…ALVG) each bind FMN.

FMN is required as a cofactor.

Its function is as follows. Flavodoxins are low-potential electron donors to a number of redox enzymes. AvFld 1 is able to donate electrons to the assimilatory nitrate reductase of A.vinelandii to catalyze the reduction of nitrate to nitrite. This Azotobacter vinelandii (strain DJ / ATCC BAA-1303) protein is Flavodoxin 1.